The chain runs to 36 residues: Omega-agatoxin-Aa1b (36 aa).

This sequence belongs to the neurotoxin 04 (omega-agtx) family. 01 (type I omega-agtx) subfamily. In terms of tissue distribution, expressed by the venom gland.

It is found in the secreted. In terms of biological role, omega-agatoxin are antagonist of voltage-gated calcium channels. They block insect neuromuscular transmission presynaptically. This toxin is a blocker of L-type calcium channels (Cav/CACNA1). The polypeptide is Omega-agatoxin-Aa1b (Agelenopsis aperta (North American funnel-web spider)).